The primary structure comprises 312 residues: Olfactory receptor 4F6 (312 aa).

Residues 1-25 are Extracellular-facing; that stretch reads MDEANHSVVSEFVFLGLSDSRKIQL. N-linked (GlcNAc...) asparagine glycosylation occurs at N5. The chain crosses the membrane as a helical span at residues 26 to 49; it reads LLFLFFSVFYVSSLMGNLLIVLTV. Topologically, residues 50 to 57 are cytoplasmic; sequence TSDPRLQS. Residues 58 to 79 form a helical membrane-spanning segment; sequence PMYFLLANLSIINLVFCSSTAP. At 80-100 the chain is on the extracellular side; that stretch reads KMIYDLFRKHKTISFGGCVVQ. C97 and C189 are oxidised to a cystine. The helical transmembrane segment at 101–120 threads the bilayer; the sequence is IFFIHAVGGTEMVLLIAMAF. Residues 121 to 139 lie on the Cytoplasmic side of the membrane; it reads DRYVAICKPLHYLTIMNPQ. A helical membrane pass occupies residues 140 to 158; that stretch reads RCILFLVISWIIGIIHSVI. Over 159–195 the chain is Extracellular; sequence QLAFVVDLLFCGPNELDSFFCDLPRFIKLACIETYTL. Residues 196 to 219 form a helical membrane-spanning segment; sequence GFMVTANSGFISLASFLILIISYI. At 220 to 235 the chain is on the cytoplasmic side; it reads FILVTVQKKSSGGIFK. Residues 236-258 traverse the membrane as a helical segment; it reads AFSMLSAHVIVVVLVFGPLIFFY. At 259–269 the chain is on the extracellular side; it reads IFPFPTSHLDK. Residues 270–289 traverse the membrane as a helical segment; that stretch reads FLAIFDAVITPVLNPVIYTF. Over 290 to 312 the chain is Cytoplasmic; it reads RNKEMMVAMRRRCSQFVNYSKIF.

Belongs to the G-protein coupled receptor 1 family.

It is found in the cell membrane. Odorant receptor. This is Olfactory receptor 4F6 (OR4F6) from Homo sapiens (Human).